We begin with the raw amino-acid sequence, 637 residues long: Threonine--tRNA ligase (637 aa).

In terms of domain architecture, TGS spans M1–T61. The segment at D244–P535 is catalytic. Zn(2+) contacts are provided by C335, H386, and H512.

Belongs to the class-II aminoacyl-tRNA synthetase family. Homodimer. The cofactor is Zn(2+).

It localises to the cytoplasm. It catalyses the reaction tRNA(Thr) + L-threonine + ATP = L-threonyl-tRNA(Thr) + AMP + diphosphate + H(+). Catalyzes the attachment of threonine to tRNA(Thr) in a two-step reaction: L-threonine is first activated by ATP to form Thr-AMP and then transferred to the acceptor end of tRNA(Thr). Also edits incorrectly charged L-seryl-tRNA(Thr). The polypeptide is Threonine--tRNA ligase (Thiobacillus denitrificans (strain ATCC 25259 / T1)).